A 578-amino-acid chain; its full sequence is Arginine--tRNA ligase (578 aa).

The 'HIGH' region motif lies at 127–137 (PNLAKEMHVGH).

The protein belongs to the class-I aminoacyl-tRNA synthetase family. Monomer.

The protein resides in the cytoplasm. It carries out the reaction tRNA(Arg) + L-arginine + ATP = L-arginyl-tRNA(Arg) + AMP + diphosphate. The sequence is that of Arginine--tRNA ligase from Pseudomonas syringae pv. tomato (strain ATCC BAA-871 / DC3000).